The sequence spans 1701 residues: Merozoite surface protein 1 (1701 aa).

The first 19 residues, 1–19 (MKIIFFLCSFLFFIINTQC), serve as a signal peptide directing secretion. Gly residues predominate over residues 89–100 (GSGGSVASGGSG). Residues 89-118 (GSGGSVASGGSGNSRRTNPSDNSSDSNTKT) are disordered. Over residues 101-116 (NSRRTNPSDNSSDSNT) the composition is skewed to low complexity. N-linked (GlcNAc...) asparagine glycosylation is found at asparagine 110 and asparagine 239. The segment at 322-344 (DAENPTTGSKPNPLPENKKKEVE) is disordered. 3 N-linked (GlcNAc...) asparagine glycosylation sites follow: asparagine 470, asparagine 536, and asparagine 607. Residues 704-739 (SETTEDGGHSTHTLSQSGETEVTEETEVTEETVGHT) form a disordered region. The segment covering 724–733 (EVTEETEVTE) has biased composition (acidic residues). Residues asparagine 802, asparagine 899, asparagine 919, asparagine 965, asparagine 991, asparagine 1089, and asparagine 1196 are each glycosylated (N-linked (GlcNAc...) asparagine). Residues 889-927 (TGTSSTSSPGNTTVNTAQSATHSNSQNQQSNASSTNTQN) are compositionally biased toward low complexity. The segment at 889-936 (TGTSSTSSPGNTTVNTAQSATHSNSQNQQSNASSTNTQNGVAVSSGPA) is disordered. 2 disordered regions span residues 1230–1259 (TPPQ…TQIP) and 1451–1472 (KEKF…DEQK). A compositionally biased stretch (polar residues) spans 1245 to 1259 (VSGSSGSTKEETQIP). The segment covering 1456-1465 (SSPPTTPPSP) has biased composition (pro residues). Asparagine 1588 carries N-linked (GlcNAc...) asparagine glycosylation. EGF-like domains follow at residues 1592–1632 (HQCV…VENP) and 1633–1680 (NPTC…IFCS). Intrachain disulfides connect cysteine 1594–cysteine 1605, cysteine 1599–cysteine 1615, cysteine 1617–cysteine 1628, cysteine 1636–cysteine 1649, cysteine 1643–cysteine 1663, and cysteine 1665–cysteine 1679. Serine 1680 is lipidated: GPI-anchor amidated serine. Residues 1681-1701 (SSNFLGISFLLILMLILYSFI) constitute a propeptide, removed in mature form.

As to quaternary structure, forms a complex composed of subunits p83, p30, p38, and p42 which remain non-covalently associated; the complex is formed at the merozoite surface prior to egress from host erythrocytes. Forms a complex composed of processed MSP1 subunits, MSP6 subunit p36 and MSP7; the complex is formed at the merozoite surface prior to egress from host erythrocytes. Within the complex, interacts (via subunit p38) with MSP6 subunit p36 and (via subunits p83, p30 and p38) with MSP7 (via subunit p22). Forms a complex composed of MSP1, MSP6, DBLMSP1 and DBLMSP2. Within the complex, interacts (via subunit p38) with DBLMSP1 and DBLMSP2. Forms a complex composed of MSP1, and rhoptry proteins RhopH3, RAP1 and CLAG9/RhopH3. Within the complex, interacts (via subunits p42 and p19) with RhopH3 (via C-terminus). Forms a complex composed of MSP1, MSP6, MSP7, MSP9 and MSP3; within the complex, MSP6 and MSP9 mediate the binding to the host erythrocyte. Interacts (via subunits p19 and p42) with MSP9; the interaction is direct; MSP1 subunits p19 or p42, and MSP9 form a co-ligand complex that interacts with host SLC4A1/Band 3 protein. May interact with PFD6. Interacts with host spectrin. In terms of assembly, interacts with host glycophorin GYPA in a sialic acid-independent manner. Interacts with host proinflammatory cytokine S100P; the interaction blocks S100P inflammatory and chemotactic activities. As to quaternary structure, interacts with host SLC4A1/Band 3 (via 5ABC region) on the host erythrocyte surface in a sialic acid-independent manner. In terms of processing, the p190 precursor is cleaved by SUB1 prior to merozoite egress into 4 subunits p83, p30, p38, and p42 which remain non-covalently associated. SUB1-mediated proteolytic cleavage occurs in an orderly manner; the first cleavage occurs at the p30/p38 site, followed by cleavage at the p83/p30 site, the last cleavage occurs at the p38/p42 site. The order of cleavage is essential for parasite viability. SUB1-mediated processing is essential for merozoite egress. In a second processing step during erythrocyte invasion, p42 is cleaved by SUB2 into p33 and p19; the latter remains attached to the merozoite surface via its GPI-anchor and is endocytosed during the subsequent ring stage.

The protein resides in the cell membrane. It is found in the secreted. It localises to the vacuole membrane. Functionally, during the asexual blood stage, involved in merozoite egress from host erythrocytes possibly via its interaction with the host cytoskeleton protein spectrin resulting in the destabilization of the host cytoskeleton and thus leading to erythrocyte cell membrane rupture. Involved in the binding to host erythrocytes and is required for host erythrocyte invasion. By binding to host proinflammatory cytokine S100P may interfere with host immune responses. In terms of biological role, involved in merozoite invasion of host erythrocytes. May play a role in the biogenesis and/or function of the food vacuole during the intraerythrocytic development. In Plasmodium falciparum (isolate mad20 / Papua New Guinea), this protein is Merozoite surface protein 1.